Here is a 146-residue protein sequence, read N- to C-terminus: Large-conductance mechanosensitive channel (146 aa).

The next 2 helical transmembrane spans lie at 14 to 34 (VLDLAVGVVIGAAFNQIVNSL) and 81 to 101 (GLFLNNLLNFLIVAFAVFLLV).

This sequence belongs to the MscL family. Homopentamer.

The protein resides in the cell membrane. Channel that opens in response to stretch forces in the membrane lipid bilayer. May participate in the regulation of osmotic pressure changes within the cell. In Symbiobacterium thermophilum (strain DSM 24528 / JCM 14929 / IAM 14863 / T), this protein is Large-conductance mechanosensitive channel.